The following is a 232-amino-acid chain: Imidazoleglycerol-phosphate dehydratase (232 aa).

The protein belongs to the imidazoleglycerol-phosphate dehydratase family.

The catalysed reaction is D-erythro-1-(imidazol-4-yl)glycerol 3-phosphate = 3-(imidazol-4-yl)-2-oxopropyl phosphate + H2O. The protein operates within amino-acid biosynthesis; L-histidine biosynthesis; L-histidine from 5-phospho-alpha-D-ribose 1-diphosphate: step 6/9. This is Imidazoleglycerol-phosphate dehydratase (HIS3) from Lachancea kluyveri (strain ATCC 58438 / CBS 3082 / BCRC 21498 / NBRC 1685 / JCM 7257 / NCYC 543 / NRRL Y-12651) (Yeast).